Here is a 460-residue protein sequence, read N- to C-terminus: Serine--tRNA ligase (460 aa).

242–244 contributes to the L-serine binding site; it reads TAE. ATP is bound by residues 273-275 and V289; that span reads RRE. Residue E296 coordinates L-serine. 369–372 contacts ATP; it reads EVSS. S405 provides a ligand contact to L-serine.

The protein belongs to the class-II aminoacyl-tRNA synthetase family. Type-1 seryl-tRNA synthetase subfamily. In terms of assembly, homodimer. The tRNA molecule binds across the dimer.

The protein localises to the cytoplasm. The catalysed reaction is tRNA(Ser) + L-serine + ATP = L-seryl-tRNA(Ser) + AMP + diphosphate + H(+). It carries out the reaction tRNA(Sec) + L-serine + ATP = L-seryl-tRNA(Sec) + AMP + diphosphate + H(+). Its pathway is aminoacyl-tRNA biosynthesis; selenocysteinyl-tRNA(Sec) biosynthesis; L-seryl-tRNA(Sec) from L-serine and tRNA(Sec): step 1/1. In terms of biological role, catalyzes the attachment of serine to tRNA(Ser). Is also able to aminoacylate tRNA(Sec) with serine, to form the misacylated tRNA L-seryl-tRNA(Sec), which will be further converted into selenocysteinyl-tRNA(Sec). The protein is Serine--tRNA ligase of Haloquadratum walsbyi (strain DSM 16790 / HBSQ001).